A 421-amino-acid chain; its full sequence is Probable sugar-binding periplasmic protein (421 aa).

A signal peptide spans 1 to 27; it reads MHKLLKLAAMGTAACALLAGMAPVANA.

Belongs to the bacterial solute-binding protein 1 family.

It is found in the periplasm. Functionally, part of a binding-protein-dependent transport system for a sugar. The polypeptide is Probable sugar-binding periplasmic protein (Brucella suis biovar 1 (strain 1330)).